A 56-amino-acid polypeptide reads, in one-letter code: Ovomucoid (56 aa).

The region spanning 6 to 56 (VDCSEYPKPDCTLEYRPLCGSDNKTYASKCNFCNAVVESNGTLTLSHFGKC) is the Kazal-like domain. 3 disulfides stabilise this stretch: Cys8/Cys38, Cys16/Cys35, and Cys24/Cys56. Asn45 carries N-linked (GlcNAc...) asparagine glycosylation.

It is found in the secreted. The chain is Ovomucoid from Callipepla squamata pallida (Blue scaled quail).